An 897-amino-acid polypeptide reads, in one-letter code: Transportin-2 (897 aa).

HEAT repeat units follow at residues 9–36, 41–79, 88–121, 127–164, 171–201, 214–241, 253–280, 296–386, 394–422, 434–461, 475–508, 516–549, 557–595, 603–654, 665–696, 704–737, 745–790, 798–831, 840–871, and 874–894; these read GLQQVLQLLKDSQSPNTATQRIVQDKLK, FPDFNNYLIFVLTRLKSEDEPTRSLSGLILKNNVKAHYQ, FIKQECLNNIGDASSLIRATIGILITTIASKGEL, LLPQLCNLLNSEDYNTCEGAFGALQKICEDSSELLDSD, NIMIPKFLQFFKHCSPKIRSHAIACVNQFIM, FIEHLFALAVDDDPEVRKNVCRALVMLL, HSIIQYMLQRTQDHDENVALEACEFWLT, VQLI…LANV, HLLPLLKGLLFHPEWVVKESGILVLGAIA, PELIPHLIQCLSDKKALVRSIACWTLSR, LKPLMTELLKRILDGNKRVQEAACSAFATLEEEA, LSYILDTLVFAFGKYQHKNLLILYDAIGTLADSV, EYIQKLMPPLIQKWNELKDEDKDLFPLLECLSSVATALQ, EPVY…GLGG, IMTLLFQCMQDSMPEVRQSSFALLGDLTKACF, AEFMPILGTNLNPEFISVCNNATWAIGEICMQMG, QMVL…YVCP, QQFIRPWCTSLRNIRDNEEKDSAFRGICMMIGVN, IFFCDAVASWVSPKDDLRDMFYKILHGFKDQV, and DNWQQFSEQFPPLLKERLAAF. The Importin N-terminal domain occupies 31 to 99; the sequence is VQDKLKQLNQ…KQECLNNIGD (69 aa). Residues 325 to 364 form a disordered region; the sequence is AVPDSEQDIKPRFHKSRTVTLPHEAERPDGSEDAEDDDDD. Residues 355–364 show a composition bias toward acidic residues; that stretch reads SEDAEDDDDD. An N6-acetyllysine modification is found at Lys-862.

It belongs to the importin beta family. Importin beta-2 subfamily.

Its subcellular location is the cytoplasm. It is found in the nucleus. Probably functions in nuclear protein import as nuclear transport receptor. Serves as receptor for nuclear localization signals (NLS) in cargo substrates. Is thought to mediate docking of the importin/substrate complex to the nuclear pore complex (NPC) through binding to nucleoporin and the complex is subsequently translocated through the pore by an energy requiring, Ran-dependent mechanism. At the nucleoplasmic side of the NPC, Ran binds to the importin, the importin/substrate complex dissociates and importin is re-exported from the nucleus to the cytoplasm where GTP hydrolysis releases Ran. The directionality of nuclear import is thought to be conferred by an asymmetric distribution of the GTP- and GDP-bound forms of Ran between the cytoplasm and nucleus. The chain is Transportin-2 (TNPO2) from Homo sapiens (Human).